A 120-amino-acid chain; its full sequence is Large ribosomal subunit protein bL12 (120 aa).

The protein belongs to the bacterial ribosomal protein bL12 family. As to quaternary structure, homodimer. Part of the ribosomal stalk of the 50S ribosomal subunit. Forms a multimeric L10(L12)X complex, where L10 forms an elongated spine to which 2 to 4 L12 dimers bind in a sequential fashion. Binds GTP-bound translation factors.

Functionally, forms part of the ribosomal stalk which helps the ribosome interact with GTP-bound translation factors. Is thus essential for accurate translation. The chain is Large ribosomal subunit protein bL12 from Haemophilus ducreyi (strain 35000HP / ATCC 700724).